The following is a 330-amino-acid chain: uncharacterized protein (330 aa).

Residues leucine 4–threonine 242 form the ABC transporter domain. Position 40 to 47 (glycine 40 to threonine 47) interacts with ATP. Aspartate 210–aspartate 330 contributes to the a nucleoside 3',5'-cyclic phosphate binding site.

The protein belongs to the ABC transporter superfamily. The complex is composed of two ATP-binding proteins (MT0079), two transmembrane proteins (MT0078) and a solute-binding protein.

Its function is as follows. Probably part of an ABC transporter complex. Probably responsible for energy coupling to the transport system. This is an uncharacterized protein from Mycobacterium tuberculosis (strain CDC 1551 / Oshkosh).